We begin with the raw amino-acid sequence, 682 residues long: Potassium-transporting ATPase ATP-binding subunit (682 aa).

Helical transmembrane passes span 34 to 54 (PVMF…IAMA), 62 to 82 (ALFS…ANFA), 219 to 239 (IALT…TATL), and 254 to 274 (VLVA…LSAI). Catalysis depends on Asp307, which acts as the 4-aspartylphosphate intermediate. ATP contacts are provided by residues Asp344, Glu348, 377-384 (FTAQSRMS), and Lys395. Asp518 and Asp522 together coordinate Mg(2+). A run of 3 helical transmembrane segments spans residues 588–608 (FAII…LNIM), 616–636 (AILS…PLAL), and 656–676 (IYGL…DLLL).

The protein belongs to the cation transport ATPase (P-type) (TC 3.A.3) family. Type IA subfamily. The system is composed of three essential subunits: KdpA, KdpB and KdpC.

The protein resides in the cell inner membrane. The catalysed reaction is K(+)(out) + ATP + H2O = K(+)(in) + ADP + phosphate + H(+). In terms of biological role, part of the high-affinity ATP-driven potassium transport (or Kdp) system, which catalyzes the hydrolysis of ATP coupled with the electrogenic transport of potassium into the cytoplasm. This subunit is responsible for energy coupling to the transport system and for the release of the potassium ions to the cytoplasm. This is Potassium-transporting ATPase ATP-binding subunit from Escherichia coli O139:H28 (strain E24377A / ETEC).